The chain runs to 255 residues: Lipoprotein-releasing system ATP-binding protein LolD 2 (255 aa).

The ABC transporter domain occupies 9-254; that stretch reads LEARGIRKSY…SDSAKLETVA (246 aa). ATP is bound at residue 45-52; the sequence is GRSGSGKS.

This sequence belongs to the ABC transporter superfamily. Lipoprotein translocase (TC 3.A.1.125) family. In terms of assembly, the complex is composed of two ATP-binding proteins (LolD) and two transmembrane proteins (LolC and LolE).

The protein localises to the cell inner membrane. Functionally, part of the ABC transporter complex LolCDE involved in the translocation of mature outer membrane-directed lipoproteins, from the inner membrane to the periplasmic chaperone, LolA. Responsible for the formation of the LolA-lipoprotein complex in an ATP-dependent manner. The protein is Lipoprotein-releasing system ATP-binding protein LolD 2 of Rhodopirellula baltica (strain DSM 10527 / NCIMB 13988 / SH1).